We begin with the raw amino-acid sequence, 485 residues long: UDP-glycosyltransferase 71B2 (485 aa).

UDP-alpha-D-glucose-binding positions include Ser287, 354–356, 371–379, and 393–396; these read APQ, HCGWNSTLE, and YAEQ.

The protein belongs to the UDP-glycosyltransferase family.

In terms of biological role, glucosyltransferase that glucosylates the cell wall inhibitor hypostatin in vivo to form a bioactive glucoside. This Arabidopsis thaliana (Mouse-ear cress) protein is UDP-glycosyltransferase 71B2 (UGT71B2).